A 394-amino-acid chain; its full sequence is Ribulose bisphosphate carboxylase large chain (394 aa).

N6,N6,N6-trimethyllysine is present on K5. Residues N114 and T164 each coordinate substrate. The Proton acceptor role is filled by K166. K168 contacts substrate. K192, D194, and E195 together coordinate Mg(2+). An N6-carboxylysine modification is found at K192. H285 acts as the Proton acceptor in catalysis. Residues R286, H318, and S370 each coordinate substrate.

This sequence belongs to the RuBisCO large chain family. Type I subfamily. Heterohexadecamer of 8 large chains and 8 small chains. Requires Mg(2+) as cofactor.

It is found in the plastid. Its subcellular location is the chloroplast. It carries out the reaction 2 (2R)-3-phosphoglycerate + 2 H(+) = D-ribulose 1,5-bisphosphate + CO2 + H2O. It catalyses the reaction D-ribulose 1,5-bisphosphate + O2 = 2-phosphoglycolate + (2R)-3-phosphoglycerate + 2 H(+). RuBisCO catalyzes two reactions: the carboxylation of D-ribulose 1,5-bisphosphate, the primary event in carbon dioxide fixation, as well as the oxidative fragmentation of the pentose substrate in the photorespiration process. Both reactions occur simultaneously and in competition at the same active site. The polypeptide is Ribulose bisphosphate carboxylase large chain (rbcL) (Cabomba caroliniana (Carolina fanwort)).